Reading from the N-terminus, the 1175-residue chain is Beta-agarase AgaO (1175 aa).

A signal peptide spans 1-29 (MRLSKSQGILPLAHAVLAAAIAYSTAATA). One can recognise a CBM6 1 domain in the interval 32–164 (YRLEAEDFTN…QWNLDKMELA (133 aa)). The disordered stretch occupies residues 169-208 (SSSSSGGGSTSSSSSGGSSSSSGSGSSSSGGSPEEGGHVS). A compositionally biased stretch (low complexity) spans 178–200 (TSSSSSGGSSSSSGSGSSSSGGS). A CBM6 2 domain is found at 211 to 339 (FKLEAESAHH…QFNIDYVIFE (129 aa)). The tract at residues 355 to 481 (IADVNDSCPG…ESGCSPSQVA (127 aa)) is disordered. Residues 382–393 (DTDKDGIADNRD) show a composition bias toward basic and acidic residues. Polar residues predominate over residues 471-481 (NESGCSPSQVA). Catalysis depends on Glu661, which acts as the Proton donor. The active-site Nucleophile is Glu832.

This sequence belongs to the glycosyl hydrolase 86 family.

The enzyme catalyses Hydrolysis of (1-&gt;4)-beta-D-galactosidic linkages in agarose, giving the tetramer as the predominant product.. Its activity is regulated as follows. Activity and stability are strongly enhanced by CaCl(2). Activity is not affected by sulfhydryl inhibitors such as iodoacetoamide and p-chloromercuribenzoate or by thiol reagents such as dithiothreitol and 2-mercaptoethanol. Strongly inhibited by N-bromosuccinimide and sodium dodecyl sulfate. In terms of biological role, endo-type beta-agarase, which degrades agarose and agarose oligosaccharides more polymerized than hexamers to yield neoagarohexaose (NA6) as the main product, with lesser amounts of neoagarotetraose (NA4) and neoagarobiose (NA2). The sequence is that of Beta-agarase AgaO from Microbulbifer thermotolerans.